A 187-amino-acid polypeptide reads, in one-letter code: Guanylate kinase (187 aa).

N-acetylserine is present on Ser-2. One can recognise a Guanylate kinase-like domain in the interval Ser-2–Phe-184. Gly-9–Ser-16 lines the ATP pocket. Residues Ser-35, Arg-39–Arg-42, Tyr-51, Glu-70, Tyr-79–Ser-81, and Asp-101 each bind GMP. Ser-149 carries the phosphoserine modification. Tyr-157 is subject to Phosphotyrosine.

Belongs to the guanylate kinase family. As to quaternary structure, monomer.

The enzyme catalyses GMP + ATP = GDP + ADP. In terms of biological role, catalyzes the reversible transfer of the terminal phosphoryl group of ATP to the acceptor molecule GMP. Essential for recycling GMP and indirectly, cGMP. The chain is Guanylate kinase (GUK1) from Saccharomyces cerevisiae (strain ATCC 204508 / S288c) (Baker's yeast).